The primary structure comprises 332 residues: RING finger protein 225 (332 aa).

The disordered stretch occupies residues methionine 1 to leucine 55. Residues serine 15 to serine 27 are compositionally biased toward low complexity. Acidic residues predominate over residues glutamate 36 to aspartate 46. An RING-type zinc finger spans residues cysteine 63–arginine 111. The segment at glycine 121–leucine 187 is disordered. The helical transmembrane segment at alanine 205–isoleucine 225 threads the bilayer. Residues threonine 259–glutamine 332 are disordered. Composition is skewed to basic and acidic residues over residues alanine 280–valine 295 and alanine 323–glutamine 332.

The protein localises to the membrane. The sequence is that of RING finger protein 225 from Mus musculus (Mouse).